Here is a 404-residue protein sequence, read N- to C-terminus: DNA polymerase processivity factor BMRF1 (404 aa).

Positions 1–300 (METTQTLRFK…SVILFNHASE (300 aa)) are homodimerization; DNA binding and DNA polymerase processivity. The tract at residues 301–404 (EAAASTASEP…KVKQAFNPLI (104 aa)) is transcriptional activation. Residues 302–404 (AAASTASEPE…KVKQAFNPLI (103 aa)) are disordered. Residues 335-344 (SPSPPPPPRT) show a composition bias toward pro residues. Position 337 is a phosphoserine (Ser337). At Thr344 the chain carries Phosphothreonine. Ser349 carries the phosphoserine modification. Thr355 is subject to Phosphothreonine.

Belongs to the herpesviridae DNA polymerase accessory subunit family. Homodimer. Two dimers can adopt a tetrameric ring-like structure. Forms a complex with the DNA-binding protein BALF2, the DNA polymerase subunit BALF5, and the alkaline exonuclease BGLF5. Interacts (via N-terminus) with BZLF1 (via bZIP domain); this interaction may inhibit BZLF1-induced transcription of the BMRF1 promoter. Interacts (via C-terminus) with host NuRD complex; this interaction is important for transcriptional activation of EBV promoters and inhibition of the ubiquitination step of DDR signaling. Phosphorylated by the viral BGLF4 kinase.

Its subcellular location is the virion tegument. It localises to the host nucleus. In terms of biological role, acts as a DNA polymerase processivity factor; a transcriptional activator for several EBV promoters and inhibits the host DNA damage response (DDR) to double-stranded DNA breaks. Plays an essential role in the viral lytic DNA replication by acting as a polymerase accessory subunit. Stimulates the viral DNA polymerase activity and appears to function with it as a holoenzyme. Increases the processivity of the viral polymerase, probably by acting as a sliding clamp that prevents dissociation of the polymerase from the active template. In addition, BMRF1 transcriptionally activates the oriLyt early BHLF1 promoter. Promotes G1/S cell cycle arrest through p53 induction. The sequence is that of DNA polymerase processivity factor BMRF1 from Epstein-Barr virus (strain AG876) (HHV-4).